A 504-amino-acid polypeptide reads, in one-letter code: Maturase K (504 aa).

It belongs to the intron maturase 2 family. MatK subfamily.

It is found in the plastid. Its subcellular location is the chloroplast. Functionally, usually encoded in the trnK tRNA gene intron. Probably assists in splicing its own and other chloroplast group II introns. This chain is Maturase K, found in Arabidopsis thaliana (Mouse-ear cress).